Reading from the N-terminus, the 113-residue chain is U11-theraphotoxin-Hhn1a (113 aa).

Positions 1–21 (MDTVRVAFLLVLVLAVSLGQA) are cleaved as a signal peptide. The propeptide occupies 22–74 (DKDENRMEMQEKTEQGKSYLDFAENLLLQKLEELEAKLLEEDSEESRNSRQKR). The segment covering 60–69 (LEEDSEESRN) has biased composition (basic and acidic residues). The segment at 60–83 (LEEDSEESRNSRQKRCIGEGVPCD) is disordered. Disulfide bonds link Cys-75/Cys-90, Cys-82/Cys-95, and Cys-89/Cys-110.

This sequence belongs to the neurotoxin 14 (magi-1) family. 01 (HNTX-16) subfamily. In terms of tissue distribution, expressed by the venom gland.

The protein localises to the secreted. Probable ion channel inhibitor. The sequence is that of U11-theraphotoxin-Hhn1a from Cyriopagopus hainanus (Chinese bird spider).